Reading from the N-terminus, the 271-residue chain is GPN-loop GTPase 3 (271 aa).

A GTP-binding site is contributed by 13–18 (GVGKST). The Gly-Pro-Asn (GPN)-loop; involved in dimer interface signature appears at 70–72 (GPN). GTP is bound at residue 173–176 (SKMD).

The protein belongs to the GPN-loop GTPase family. As to quaternary structure, heterodimers with GPN1 or GPN2. Binds to RNA polymerase II (RNAPII).

Functionally, small GTPase required for proper nuclear import of RNA polymerase II and III (RNAPII and RNAPIII). May act at an RNAP assembly step prior to nuclear import. In Yarrowia lipolytica (strain CLIB 122 / E 150) (Yeast), this protein is GPN-loop GTPase 3.